A 301-amino-acid polypeptide reads, in one-letter code: Acetaldehyde dehydrogenase (301 aa).

Cys130 (acyl-thioester intermediate) is an active-site residue. NAD(+) contacts are provided by residues 161–169 (SVGPGTRRN) and Asn272.

This sequence belongs to the acetaldehyde dehydrogenase family.

It catalyses the reaction acetaldehyde + NAD(+) + CoA = acetyl-CoA + NADH + H(+). The protein is Acetaldehyde dehydrogenase (mhpF) of Cupriavidus taiwanensis (strain DSM 17343 / BCRC 17206 / CCUG 44338 / CIP 107171 / LMG 19424 / R1) (Ralstonia taiwanensis (strain LMG 19424)).